Reading from the N-terminus, the 377-residue chain is Geranylgeranyl transferase type-1 subunit beta (377 aa).

4 PFTB repeats span residues 144 to 186 (KEAC…YMLN), 193 to 234 (MKKA…CLMG), 245 to 284 (LNRI…KLLK), and 291 to 333 (FEKN…SLME). Geranylgeranyl diphosphate contacts are provided by residues 219 to 221 (HGG) and 263 to 266 (RPNK). Positions 269 and 271 each coordinate Zn(2+). Position 272–275 (272–275 (YSFW)) interacts with geranylgeranyl diphosphate. Zn(2+) is bound at residue histidine 321.

Belongs to the protein prenyltransferase subunit beta family. In terms of assembly, heterodimer of FNTA and PGGT1B. PGGT1B mediates interaction with substrate peptides. It depends on Zn(2+) as a cofactor. Mg(2+) is required as a cofactor.

The catalysed reaction is geranylgeranyl diphosphate + L-cysteinyl-[protein] = S-geranylgeranyl-L-cysteinyl-[protein] + diphosphate. Functionally, catalyzes the transfer of a geranyl-geranyl moiety from geranyl-geranyl pyrophosphate to a cysteine at the fourth position from the C-terminus of proteins having the C-terminal sequence Cys-aliphatic-aliphatic-X. Known substrates include RAC1, RAC2, RAP1A and RAP1B. This Bos taurus (Bovine) protein is Geranylgeranyl transferase type-1 subunit beta (PGGT1B).